Here is a 380-residue protein sequence, read N- to C-terminus: Cytochrome b (380 aa).

Helical transmembrane passes span 33–53, 77–98, 113–133, and 178–198; these read FGSL…FLAM, WMIR…FLHI, WNIG…GYVL, and FFTL…LHLL. Heme b-binding residues include His-83 and His-97. His-182 and His-196 together coordinate heme b. His-201 is a binding site for a ubiquinone. 4 helical membrane passes run 226-246, 288-308, 320-340, and 347-367; these read IKDI…TLLS, LGGV…PALH, LSQF…WIGG, and FITI…LLMP.

It belongs to the cytochrome b family. As to quaternary structure, the cytochrome bc1 complex contains 11 subunits: 3 respiratory subunits (MT-CYB, CYC1 and UQCRFS1), 2 core proteins (UQCRC1 and UQCRC2) and 6 low-molecular weight proteins (UQCRH/QCR6, UQCRB/QCR7, UQCRQ/QCR8, UQCR10/QCR9, UQCR11/QCR10 and a cleavage product of UQCRFS1). This cytochrome bc1 complex then forms a dimer. Heme b serves as cofactor.

The protein localises to the mitochondrion inner membrane. In terms of biological role, component of the ubiquinol-cytochrome c reductase complex (complex III or cytochrome b-c1 complex) that is part of the mitochondrial respiratory chain. The b-c1 complex mediates electron transfer from ubiquinol to cytochrome c. Contributes to the generation of a proton gradient across the mitochondrial membrane that is then used for ATP synthesis. This chain is Cytochrome b (MT-CYB), found in Pongo abelii (Sumatran orangutan).